Reading from the N-terminus, the 85-residue chain is Large ribosomal subunit protein bL27 (85 aa).

Residues 1 to 21 (MAHKKGGGSTHNGRDSKPKML) are disordered.

The protein belongs to the bacterial ribosomal protein bL27 family.

The chain is Large ribosomal subunit protein bL27 from Albidiferax ferrireducens (strain ATCC BAA-621 / DSM 15236 / T118) (Rhodoferax ferrireducens).